Here is a 584-residue protein sequence, read N- to C-terminus: Endogenous retrovirus group FC1 Env polyprotein (584 aa).

Positions 1–22 are cleaved as a signal peptide; it reads MARPSPLCLLLLLTLLTPIVPS. Residues 23-518 lie on the Extracellular side of the membrane; that stretch reads NSLLTEPPFR…GWWQSPLTTW (496 aa). Residues Asn-69 and Asn-247 are each glycosylated (N-linked (GlcNAc...) asparagine). Positions 251–254 match the CXXC motif; the sequence is CFLC. 8 N-linked (GlcNAc...) asparagine glycosylation sites follow: Asn-272, Asn-276, Asn-308, Asn-313, Asn-322, Asn-334, Asn-342, and Asn-346. Positions 384 to 404 are fusion peptide; it reads AVFPPLVIGVSLTSSLVASGL. A CKS-17 motif is present at residues 449–465; that stretch reads MQNRRALDLLTADKGGT. Cysteines 466 and 473 form a disulfide. A CX6CC motif is present at residues 466–474; the sequence is CMFLGEECC. The N-linked (GlcNAc...) asparagine glycan is linked to Asn-478. The chain crosses the membrane as a helical span at residues 519–539; that stretch reads IIPFISPILIICLLLLIAPCV. Residues 540-584 are Cytoplasmic-facing; the sequence is LKFIKNRISEVSRVTVNQMLLHPYSRLPTSEDHYDDALTQQEAAR.

It belongs to the gamma type-C retroviral envelope protein family. HERV class-I F(c)1 env subfamily. The surface (SU) and transmembrane (TM) proteins form a heterodimer. SU and TM are attached by noncovalent interactions or by a labile interchain disulfide bond. Specific enzymatic cleavages in vivo yield the mature SU and TM proteins. Post-translationally, the CXXC motif is highly conserved across a broad range of retroviral envelope proteins. It is thought to participate in the formation of a labile disulfide bond possibly with the CX6CC motif present in the transmembrane protein. Low expression in skin, testis and trachea.

It is found in the virion. The protein resides in the cell membrane. Functionally, retroviral envelope proteins mediate receptor recognition and membrane fusion during early infection. Endogenous envelope proteins may have kept, lost or modified their original function during evolution. This endogenous envelope protein has lost its original fusogenic properties. SU mediates receptor recognition. Its function is as follows. TM anchors the envelope heterodimer to the viral membrane through one transmembrane domain. The other hydrophobic domain, called fusion peptide, mediates fusion of the viral membrane with the target cell membrane. The chain is Endogenous retrovirus group FC1 Env polyprotein (ERVFC1) from Homo sapiens (Human).